The following is a 159-amino-acid chain: Cytochrome b6-f complex subunit 4 (159 aa).

The next 3 helical transmembrane spans lie at L36 to V56, L95 to E115, and T131 to I151.

It belongs to the cytochrome b family. PetD subfamily. In terms of assembly, the 4 large subunits of the cytochrome b6-f complex are cytochrome b6, subunit IV (17 kDa polypeptide, petD), cytochrome f and the Rieske protein, while the 4 small subunits are petG, petL, petM and petN. The complex functions as a dimer.

Its subcellular location is the plastid. The protein resides in the chloroplast thylakoid membrane. Its function is as follows. Component of the cytochrome b6-f complex, which mediates electron transfer between photosystem II (PSII) and photosystem I (PSI), cyclic electron flow around PSI, and state transitions. In Piper cenocladum (Ant piper), this protein is Cytochrome b6-f complex subunit 4.